Reading from the N-terminus, the 342-residue chain is Protein BMEI1586 (342 aa).

Ser-90 functions as the Proton acceptor in the catalytic mechanism. Residues 91–92, Asp-251, and 256–257 contribute to the substrate site; these read GS and GT.

This sequence belongs to the proline racemase family. In terms of assembly, homotetramer.

The enzyme catalyses trans-4-hydroxy-L-proline = cis-4-hydroxy-D-proline. In vitro, catalyzes the epimerization of trans-4-hydroxy-L-proline (t4LHyp) to cis-4-hydroxy-D-proline (c4DHyp) and that of trans-3-hydroxy-L-proline (t3LHyp) to cis-3-hydroxy-D-proline (c3DHyp), albeit with very low efficiency. The physiological substrate may be different. Displays neither proline racemase activity nor t3LHyp dehydratase activity. In Brucella melitensis biotype 1 (strain ATCC 23456 / CCUG 17765 / NCTC 10094 / 16M), this protein is Protein BMEI1586.